Consider the following 315-residue polypeptide: Trimethylguanosine synthase (315 aa).

The interval Met-1–Arg-58 is required for correct nucleolar localization. An S-adenosyl-L-methionine-binding site is contributed by Asp-126. The disordered stretch occupies residues Thr-271–Gly-315. The segment covering Asn-273–Leu-284 has biased composition (basic and acidic residues).

It belongs to the methyltransferase superfamily. Trimethylguanosine synthase family. As to quaternary structure, monomer. Interacts with the spliceosomal snRNP core component SMB1 and the snoRNP components CBF5 and NOP58.

It is found in the nucleus. The protein localises to the nucleolus. The enzyme catalyses a 5'-end (N(7)-methyl 5'-triphosphoguanosine)-ribonucleoside in snRNA + S-adenosyl-L-methionine = a 5'-end (N(2),N(7)-dimethyl 5'-triphosphoguanosine)-ribonucleoside in snRNA + S-adenosyl-L-homocysteine + H(+). It carries out the reaction a 5'-end (N(7)-methyl 5'-triphosphoguanosine)-ribonucleoside in snoRNA + S-adenosyl-L-methionine = a 5'-end (N(2),N(7)-dimethyl 5'-triphosphoguanosine)-ribonucleoside in snoRNA + S-adenosyl-L-homocysteine + H(+). It catalyses the reaction a 5'-end (N(2),N(7)-dimethyl 5'-triphosphoguanosine)-ribonucleoside in snRNA + S-adenosyl-L-methionine = a 5'-end (N(2),N(2),N(7)-trimethyl 5'-triphosphoguanosine)-ribonucleoside in snRNA + S-adenosyl-L-homocysteine + H(+). The catalysed reaction is a 5'-end (N(2),N(7)-dimethyl 5'-triphosphoguanosine)-ribonucleoside in snoRNA + S-adenosyl-L-methionine = a 5'-end (N(2),N(2),N(7)-trimethyl 5'-triphosphoguanosine)-ribonucleoside in snoRNA + S-adenosyl-L-homocysteine + H(+). With respect to regulation, substrate inhibited by S-adenosyl-L-homocysteine. Functionally, catalyzes the two serial methylation steps for the conversion of the 7-monomethylguanosine (m(7)G) caps of snRNAs and snoRNAs to a 2,2,7-trimethylguanosine (m(2,2,7)G) cap structure. The enzyme is specific for guanine, and N7 methylation must precede N2 methylation. Hypermethylates the m3G cap on TLC1 telomerase which affects telomere silencing and telomere length regulation. Required for pre-mRNA splicing, pre-rRNA processing and small ribosomal subunit synthesis. Involved in nucleolar structural organization. This Saccharomyces cerevisiae (strain ATCC 204508 / S288c) (Baker's yeast) protein is Trimethylguanosine synthase (TGS1).